Here is a 220-residue protein sequence, read N- to C-terminus: Adenylate kinase (220 aa).

10 to 15 (GAGKGT) is a binding site for ATP. An NMP region spans residues 30 to 59 (STGDMLRAAVKAGSPLGVEAKGYMDAGKLV). AMP contacts are provided by residues T31, R36, 57–59 (KLV), 85–88 (GFPR), and Q92. An LID region spans residues 122-159 (GRRTHAASGRTYHVKFNPPKVEGQDDVTGEPLIQRDDD). ATP contacts are provided by residues R123 and 132–133 (TY). Residues R156 and R167 each coordinate AMP. G206 contributes to the ATP binding site.

Belongs to the adenylate kinase family. As to quaternary structure, monomer.

It is found in the cytoplasm. The catalysed reaction is AMP + ATP = 2 ADP. Its pathway is purine metabolism; AMP biosynthesis via salvage pathway; AMP from ADP: step 1/1. Catalyzes the reversible transfer of the terminal phosphate group between ATP and AMP. Plays an important role in cellular energy homeostasis and in adenine nucleotide metabolism. This chain is Adenylate kinase, found in Burkholderia vietnamiensis (strain G4 / LMG 22486) (Burkholderia cepacia (strain R1808)).